A 296-amino-acid polypeptide reads, in one-letter code: Small ribosomal subunit biogenesis GTPase RsgA (296 aa).

One can recognise a CP-type G domain in the interval 63–224; that stretch reads KNQLVRPMVA…IADTPGFSSY (162 aa). Residues 112–115 and 167–175 contribute to the GTP site; these read SKTD and GQTGAGKST. 4 residues coordinate Zn(2+): Cys-248, Cys-253, His-255, and Cys-261.

Belongs to the TRAFAC class YlqF/YawG GTPase family. RsgA subfamily. In terms of assembly, monomer. Associates with 30S ribosomal subunit, binds 16S rRNA. The cofactor is Zn(2+).

The protein localises to the cytoplasm. In terms of biological role, one of several proteins that assist in the late maturation steps of the functional core of the 30S ribosomal subunit. Helps release RbfA from mature subunits. May play a role in the assembly of ribosomal proteins into the subunit. Circularly permuted GTPase that catalyzes slow GTP hydrolysis, GTPase activity is stimulated by the 30S ribosomal subunit. In Limosilactobacillus fermentum (strain NBRC 3956 / LMG 18251) (Lactobacillus fermentum), this protein is Small ribosomal subunit biogenesis GTPase RsgA.